Consider the following 515-residue polypeptide: 1-pyrroline-5-carboxylate dehydrogenase (515 aa).

Catalysis depends on residues Glu286 and Cys320.

Belongs to the aldehyde dehydrogenase family. RocA subfamily.

It catalyses the reaction L-glutamate 5-semialdehyde + NAD(+) + H2O = L-glutamate + NADH + 2 H(+). The protein operates within amino-acid degradation; L-proline degradation into L-glutamate; L-glutamate from L-proline: step 2/2. The polypeptide is 1-pyrroline-5-carboxylate dehydrogenase (Bacillus cereus (strain B4264)).